The chain runs to 252 residues: Thiazole synthase (252 aa).

The Schiff-base intermediate with DXP role is filled by lysine 98. Residues glycine 159, alanine 185–glycine 186, and alanine 207–threonine 208 each bind 1-deoxy-D-xylulose 5-phosphate.

Belongs to the ThiG family. As to quaternary structure, homotetramer. Forms heterodimers with either ThiH or ThiS.

It localises to the cytoplasm. The catalysed reaction is [ThiS sulfur-carrier protein]-C-terminal-Gly-aminoethanethioate + 2-iminoacetate + 1-deoxy-D-xylulose 5-phosphate = [ThiS sulfur-carrier protein]-C-terminal Gly-Gly + 2-[(2R,5Z)-2-carboxy-4-methylthiazol-5(2H)-ylidene]ethyl phosphate + 2 H2O + H(+). Its pathway is cofactor biosynthesis; thiamine diphosphate biosynthesis. Its function is as follows. Catalyzes the rearrangement of 1-deoxy-D-xylulose 5-phosphate (DXP) to produce the thiazole phosphate moiety of thiamine. Sulfur is provided by the thiocarboxylate moiety of the carrier protein ThiS. In vitro, sulfur can be provided by H(2)S. The polypeptide is Thiazole synthase (Mycolicibacterium smegmatis (strain ATCC 700084 / mc(2)155) (Mycobacterium smegmatis)).